The following is a 250-amino-acid chain: Coproheme decarboxylase (250 aa).

Fe-coproporphyrin III is bound by residues arginine 131, 145–149 (YPMNK), histidine 172, and glutamine 185. Residue tyrosine 145 is part of the active site.

Belongs to the ChdC family. Type 1 subfamily. Requires Fe-coproporphyrin III as cofactor.

The enzyme catalyses Fe-coproporphyrin III + 2 H2O2 + 2 H(+) = heme b + 2 CO2 + 4 H2O. It catalyses the reaction Fe-coproporphyrin III + H2O2 + H(+) = harderoheme III + CO2 + 2 H2O. The catalysed reaction is harderoheme III + H2O2 + H(+) = heme b + CO2 + 2 H2O. It functions in the pathway porphyrin-containing compound metabolism; protoheme biosynthesis. Involved in coproporphyrin-dependent heme b biosynthesis. Catalyzes the decarboxylation of Fe-coproporphyrin III (coproheme) to heme b (protoheme IX), the last step of the pathway. The reaction occurs in a stepwise manner with a three-propionate intermediate. The polypeptide is Coproheme decarboxylase (Staphylococcus aureus (strain Mu50 / ATCC 700699)).